Here is a 302-residue protein sequence, read N- to C-terminus: uncharacterized protein (302 aa).

9 helical membrane passes run 1–21 (MSWI…LGVI), 33–53 (SLLF…YIYY), 67–87 (FLIE…IFQF), 101–121 (FGII…IILI), 124–144 (FSWL…KTFY), 185–205 (YVTP…VFAI), 220–240 (IIYT…FCLA), 253–273 (LALI…IAIP), and 274–294 (AYIS…ASVI).

The protein belongs to the TerC family.

It localises to the cell membrane. This is an uncharacterized protein from Rickettsia bellii (strain RML369-C).